The chain runs to 550 residues: MKIKLLCISLAVLFCSSANAQKKQAKVQPSVFPQTVARPKLVVGMVIDQMRWDYLYRFYARYGNGGFKRLINEGFSAENTLIPYTPTLTACGHSSIYTGSVPAINGIIGNNWFDPQLGRDVYCVEDKSVKTVGSSSNEGLMSPKNLLVTTVTDELRMATNFRSKVISVSIKDRGAILPGGHTANGAYWYDDMTGSFISSTHYMQQLPTWVNDFNAQRLPNKYFEQDWNTLYPIETYTESTADAKPYERTFKGAKTSSFPHLFKQYANKNYSMMASMPQGNSFTLEFAKAAIPAEKLGQTGNTDFLAVSLSSTDYVGHQFGPNSIELEDTYLRLDKDLEDFFNYLDKTIGKGNYLLFLTADHGATHVPGFLRNKMPGGRLLLKVQTDLDSLIFNEFKVRCNFTIINNQVIFDTDAIKEAKADYAKIKQSTIDYLVKQDGVLNAVDIKNMGAVTIPQEIKNKIINGYNARRSGDVYIILDAGWYPTLTPGTGHAAWNPYDSHIPALFMGWGVKPGKTNKEYYMSDIAPTVSALLHIQQPSGSIGKVITDLLK.

An N-terminal signal peptide occupies residues 1–20 (MKIKLLCISLAVLFCSSANA). Positions 48 and 89 each coordinate Zn(2+). Thr89 (phosphothreonine intermediate) is an active-site residue. Residues Asn110 and 171 to 173 (KDR) contribute to the substrate site. The Zn(2+) site is built by Asp313, His317, Asp360, His361, and His491.

Requires Zn(2+) as cofactor.

The protein resides in the cell inner membrane. The enzyme catalyses a phosphate monoester + H2O = an alcohol + phosphate. Subject to competitive inhibition by phosphate. Inhibited by manganese. Magnesium mildly increases enzyme activity when the zinc concentration is suboptimal. Optimal activity is dependent on the presence of 0.01-2% Triton X-100. Triton X-100 at a concentration of 0.05% increases the activity about fivefold relative to that in its absence. The enzyme is even active in Triton X-100 concentrations up to 80%. 50% inhibition by 4 mM EDTA and 50% inhibition by 48 mM sodium citrate. Alkaline phosphatase with broad substrate specificity. The protein is Alkaline phosphatase PhoV of Synechococcus elongatus (strain ATCC 33912 / PCC 7942 / FACHB-805) (Anacystis nidulans R2).